A 229-amino-acid polypeptide reads, in one-letter code: RNA chaperone ProQ (229 aa).

The interval 105 to 178 (EAKARVQAQR…PREEKHTPVS (74 aa)) is disordered. A compositionally biased stretch (basic and acidic residues) spans 117 to 136 (QQAKKREAAAAAGDKESAPR). Residues 137–146 (RERKPRPAAP) show a composition bias toward basic residues. A compositionally biased stretch (basic and acidic residues) spans 147–176 (RRKEGAERKPRAEKPAAKAPRAPREEKHTP).

This sequence belongs to the ProQ family.

It is found in the cytoplasm. In terms of biological role, RNA chaperone with significant RNA binding, RNA strand exchange and RNA duplexing activities. May regulate ProP activity through an RNA-based, post-transcriptional mechanism. The protein is RNA chaperone ProQ of Escherichia fergusonii (strain ATCC 35469 / DSM 13698 / CCUG 18766 / IAM 14443 / JCM 21226 / LMG 7866 / NBRC 102419 / NCTC 12128 / CDC 0568-73).